The chain runs to 325 residues: GMP reductase (325 aa).

Residue Cys174 is the Thioimidate intermediate of the active site. Residue 203-226 (IVADGGIRNNGDIAKSIRFGASMC) participates in NADP(+) binding.

The protein belongs to the IMPDH/GMPR family. GuaC type 2 subfamily.

It carries out the reaction IMP + NH4(+) + NADP(+) = GMP + NADPH + 2 H(+). Its function is as follows. Catalyzes the irreversible NADPH-dependent deamination of GMP to IMP. It functions in the conversion of nucleobase, nucleoside and nucleotide derivatives of G to A nucleotides, and in maintaining the intracellular balance of A and G nucleotides. This Ligilactobacillus salivarius (strain UCC118) (Lactobacillus salivarius) protein is GMP reductase.